Here is a 32-residue protein sequence, read N- to C-terminus: Delta-conotoxin-like CnVIB (32 aa).

3 cysteine pairs are disulfide-bonded: Cys-3-Cys-18, Cys-10-Cys-22, and Cys-17-Cys-27. 4-hydroxyproline is present on residues Pro-6 and Pro-14.

It belongs to the conotoxin O1 superfamily. Expressed by the venom duct.

It localises to the secreted. Its function is as follows. Delta-conotoxins bind to site 6 of voltage-gated sodium channels (Nav) and inhibit the inactivation process. This toxin acts on Nav1.4/SCN4A and Nav1.6/SCN8A (EC(50)=2.3 uM). This Conus consors (Singed cone) protein is Delta-conotoxin-like CnVIB.